Here is a 391-residue protein sequence, read N- to C-terminus: Heme A synthase (391 aa).

8 consecutive transmembrane segments (helical) span residues 37–57, 121–141, 152–172, 186–206, 229–249, 298–318, 332–352, and 354–374; these read IRLW…VGGL, RQLG…FLAA, LLAL…MVAS, LATH…QALL, TTVL…VAGI, FLHR…WIFG, LLAM…LSAA, and WQVA…ILHA. Histidine 300 is a binding site for heme. Residue histidine 360 participates in heme binding.

The protein belongs to the COX15/CtaA family. Type 2 subfamily. In terms of assembly, interacts with CtaB. Heme b is required as a cofactor.

It is found in the cell membrane. The catalysed reaction is Fe(II)-heme o + 2 A + H2O = Fe(II)-heme a + 2 AH2. It participates in porphyrin-containing compound metabolism; heme A biosynthesis; heme A from heme O: step 1/1. Functionally, catalyzes the conversion of heme O to heme A by two successive hydroxylations of the methyl group at C8. The first hydroxylation forms heme I, the second hydroxylation results in an unstable dihydroxymethyl group, which spontaneously dehydrates, resulting in the formyl group of heme A. This is Heme A synthase from Cereibacter sphaeroides (strain KD131 / KCTC 12085) (Rhodobacter sphaeroides).